Consider the following 451-residue polypeptide: Adenylyltransferase and sulfurtransferase MOCS3-1 (451 aa).

Residues 42-62 form a disordered region; sequence GEDSDEAEESSNDMPTPQTKL. Over residues 43-52 the composition is skewed to acidic residues; sequence EDSDEAEESS. Position 60 is a phosphothreonine (Thr-60). ATP contacts are provided by residues Gly-99, Asp-120, 127-131, Lys-144, and 188-189; these read SNLHR and DN. Zn(2+) contacts are provided by Cys-229 and Cys-232. Catalysis depends on Cys-246, which acts as the Glycyl thioester intermediate; for adenylyltransferase activity. Zn(2+) contacts are provided by Cys-304 and Cys-307. In terms of domain architecture, Rhodanese spans 353-449; that stretch reads QSQPHLLLDV…WTGSVDATFP (97 aa). Cys-408 acts as the Cysteine persulfide intermediate; for sulfurtransferase activity in catalysis.

The protein in the N-terminal section; belongs to the HesA/MoeB/ThiF family. UBA4 subfamily. It depends on Zn(2+) as a cofactor.

The protein localises to the cytoplasm. The enzyme catalyses [molybdopterin-synthase sulfur-carrier protein]-C-terminal Gly-Gly + ATP + H(+) = [molybdopterin-synthase sulfur-carrier protein]-C-terminal Gly-Gly-AMP + diphosphate. It catalyses the reaction [molybdopterin-synthase sulfur-carrier protein]-C-terminal Gly-Gly-AMP + S-sulfanyl-L-cysteinyl-[cysteine desulfurase] + AH2 = [molybdopterin-synthase sulfur-carrier protein]-C-terminal-Gly-aminoethanethioate + L-cysteinyl-[cysteine desulfurase] + A + AMP + 2 H(+). Its pathway is tRNA modification; 5-methoxycarbonylmethyl-2-thiouridine-tRNA biosynthesis. It participates in cofactor biosynthesis; molybdopterin biosynthesis. Its function is as follows. Plays a central role in 2-thiolation of mcm(5)S(2)U at tRNA wobble positions of cytosolic tRNA(Lys), tRNA(Glu) and tRNA(Gln). Also essential during biosynthesis of the molybdenum cofactor. Acts by mediating the C-terminal thiocarboxylation of sulfur carriers URM1 and MOCS2A. Its N-terminus first activates URM1 and MOCS2A as acyl-adenylates (-COAMP), then the persulfide sulfur on the catalytic cysteine is transferred to URM1 and MOCS2A to form thiocarboxylation (-COSH) of their C-terminus. The reaction probably involves hydrogen sulfide that is generated from the persulfide intermediate and that acts as a nucleophile towards URM1 and MOCS2A. Subsequently, a transient disulfide bond is formed. Does not use thiosulfate as sulfur donor; NFS1 probably acting as a sulfur donor for thiocarboxylation reactions. This Drosophila pseudoobscura pseudoobscura (Fruit fly) protein is Adenylyltransferase and sulfurtransferase MOCS3-1.